Reading from the N-terminus, the 94-residue chain is Translation initiation factor 1A 2 (94 aa).

The S1-like domain occupies 6 to 80; sequence GRRNLRMPSD…EKANIEWRYS (75 aa).

The protein belongs to the eIF-1A family.

Seems to be required for maximal rate of protein biosynthesis. Enhances ribosome dissociation into subunits and stabilizes the binding of the initiator Met-tRNA(I) to 40 S ribosomal subunits. This is Translation initiation factor 1A 2 from Haloquadratum walsbyi (strain DSM 16790 / HBSQ001).